The following is a 344-amino-acid chain: Dihydroorotase (344 aa).

Residues histidine 13 and histidine 15 each coordinate Zn(2+). Substrate is bound by residues histidine 15 to arginine 17 and asparagine 41. Lysine 99, histidine 136, and histidine 174 together coordinate Zn(2+). The residue at position 99 (lysine 99) is an N6-carboxylysine. Histidine 136 serves as a coordination point for substrate. Position 219 (leucine 219) interacts with substrate. Aspartate 247 is a Zn(2+) binding site. Aspartate 247 is a catalytic residue. Substrate is bound by residues histidine 251 and alanine 263.

Belongs to the metallo-dependent hydrolases superfamily. DHOase family. Class II DHOase subfamily. As to quaternary structure, homodimer. It depends on Zn(2+) as a cofactor.

It catalyses the reaction (S)-dihydroorotate + H2O = N-carbamoyl-L-aspartate + H(+). It participates in pyrimidine metabolism; UMP biosynthesis via de novo pathway; (S)-dihydroorotate from bicarbonate: step 3/3. Functionally, catalyzes the reversible cyclization of carbamoyl aspartate to dihydroorotate. This chain is Dihydroorotase, found in Azoarcus sp. (strain BH72).